We begin with the raw amino-acid sequence, 370 residues long: Propane 2-monooxygenase, reductase component (370 aa).

Residues 1-14 (MAPRPLRRHPPLHH) show a composition bias toward basic residues. A disordered region spans residues 1–21 (MAPRPLRRHPPLHHSFHESRR). The 2Fe-2S ferredoxin-type domain occupies 28 to 118 (HRINFEPVDI…DCTIELLNFD (91 aa)). Residues C62, C67, C70, and C102 each contribute to the [2Fe-2S] cluster site. Residues 128 to 229 (IQDVRTRVTR…TGPYGSFTIK (102 aa)) form the FAD-binding FR-type domain.

This sequence belongs to the TmoA/XamoA family. As to quaternary structure, the propane 2-monooxygenase multicomponent enzyme system is composed of an electron transfer component and a monooxygenase component interacting with the effector protein PrmD. The electron transfer component is composed of a reductase (PrmB), and the monooxygenase component is formed by a large subunit (PrmA) and a small subunit (PrmC). FAD is required as a cofactor. [2Fe-2S] cluster serves as cofactor.

Its function is as follows. Reductase component of the propane 2-monooxygenase multicomponent enzyme system which is involved in the degradation of propane via the O2-dependent hydroxylation of propane. Reductase catalyzes the transfer of electrons from NADH or NADPH to monooxygenase. The polypeptide is Propane 2-monooxygenase, reductase component (Rhodococcus jostii (strain RHA1)).